The primary structure comprises 212 residues: Thymidylate kinase (212 aa).

10 to 17 lines the ATP pocket; it reads GLEGAGKT.

This sequence belongs to the thymidylate kinase family.

The enzyme catalyses dTMP + ATP = dTDP + ADP. Its function is as follows. Phosphorylation of dTMP to form dTDP in both de novo and salvage pathways of dTTP synthesis. In Cronobacter sakazakii (strain ATCC BAA-894) (Enterobacter sakazakii), this protein is Thymidylate kinase.